The chain runs to 194 residues: Probable GTP-binding protein EngB (194 aa).

In terms of domain architecture, EngB-type G spans 22–194; sequence KIPQIAIVGK…LRIFEEVIEK (173 aa). Residues 30-37, 57-61, 75-78, 142-145, and 173-175 each bind GTP; these read GKSNVGKS, GKTRG, DLPG, TKAD, and FSA. Mg(2+)-binding residues include Ser-37 and Thr-59.

The protein belongs to the TRAFAC class TrmE-Era-EngA-EngB-Septin-like GTPase superfamily. EngB GTPase family. Requires Mg(2+) as cofactor.

Functionally, necessary for normal cell division and for the maintenance of normal septation. In Caldanaerobacter subterraneus subsp. tengcongensis (strain DSM 15242 / JCM 11007 / NBRC 100824 / MB4) (Thermoanaerobacter tengcongensis), this protein is Probable GTP-binding protein EngB.